A 30-amino-acid polypeptide reads, in one-letter code: Kalata-B16 (30 aa).

Positions 1–30 (GIPCAESCVYIPCTITALLGCKCQDKVCYD) form a cross-link, cyclopeptide (Gly-Asp). Cystine bridges form between cysteine 4-cysteine 21, cysteine 8-cysteine 23, and cysteine 13-cysteine 28.

In terms of processing, this is a cyclic peptide.

Functionally, probably participates in a plant defense mechanism. The polypeptide is Kalata-B16 (Oldenlandia affinis).